The chain runs to 110 residues: METIAKHRHARSSAQKVRLVADLIRGKKVSQALDILTYTNKKAAVQVKKVLESAIANAEHNDGADIDDLKVTKIFVDEGPSMKRIMPRAKGRADRILKRTSHITVVVSDR.

It belongs to the universal ribosomal protein uL22 family. In terms of assembly, part of the 50S ribosomal subunit.

This protein binds specifically to 23S rRNA; its binding is stimulated by other ribosomal proteins, e.g. L4, L17, and L20. It is important during the early stages of 50S assembly. It makes multiple contacts with different domains of the 23S rRNA in the assembled 50S subunit and ribosome. Functionally, the globular domain of the protein is located near the polypeptide exit tunnel on the outside of the subunit, while an extended beta-hairpin is found that lines the wall of the exit tunnel in the center of the 70S ribosome. This chain is Large ribosomal subunit protein uL22, found in Shigella flexneri serotype 5b (strain 8401).